Here is a 150-residue protein sequence, read N- to C-terminus: Cytochrome c oxidase subunit 5A, mitochondrial (150 aa).

The N-terminal 41 residues, 1–41 (MLGAALRRCAVAATAWAGPRGLLHSAPTPGPAAAIHSVRCY), are a transit peptide targeting the mitochondrion. Residues 2 to 17 (LGAALRRCAVAATAWA) carry the SIFI-degron motif. 2 positions are modified to N6-acetyllysine: K87 and K113. T141 carries the phosphothreonine modification.

This sequence belongs to the cytochrome c oxidase subunit 5A family. As to quaternary structure, component of the cytochrome c oxidase (complex IV, CIV), a multisubunit enzyme composed of 14 subunits. The complex is composed of a catalytic core of 3 subunits MT-CO1, MT-CO2 and MT-CO3, encoded in the mitochondrial DNA, and 11 supernumerary subunits COX4I, COX5A, COX5B, COX6A, COX6B, COX6C, COX7A, COX7B, COX7C, COX8 and NDUFA4, which are encoded in the nuclear genome. The complex exists as a monomer or a dimer and forms supercomplexes (SCs) in the inner mitochondrial membrane with NADH-ubiquinone oxidoreductase (complex I, CI) and ubiquinol-cytochrome c oxidoreductase (cytochrome b-c1 complex, complex III, CIII), resulting in different assemblies (supercomplex SCI(1)III(2)IV(1) and megacomplex MCI(2)III(2)IV(2)). Interacts with AFG1L. Interacts with RAB5IF. In terms of processing, in response to mitochondrial stress, the precursor protein is ubiquitinated by the SIFI complex in the cytoplasm before mitochondrial import, leading to its degradation. Within the SIFI complex, UBR4 initiates ubiquitin chain that are further elongated or branched by KCMF1.

The protein localises to the mitochondrion inner membrane. The protein operates within energy metabolism; oxidative phosphorylation. Component of the cytochrome c oxidase, the last enzyme in the mitochondrial electron transport chain which drives oxidative phosphorylation. The respiratory chain contains 3 multisubunit complexes succinate dehydrogenase (complex II, CII), ubiquinol-cytochrome c oxidoreductase (cytochrome b-c1 complex, complex III, CIII) and cytochrome c oxidase (complex IV, CIV), that cooperate to transfer electrons derived from NADH and succinate to molecular oxygen, creating an electrochemical gradient over the inner membrane that drives transmembrane transport and the ATP synthase. Cytochrome c oxidase is the component of the respiratory chain that catalyzes the reduction of oxygen to water. Electrons originating from reduced cytochrome c in the intermembrane space (IMS) are transferred via the dinuclear copper A center (CU(A)) of subunit 2 and heme A of subunit 1 to the active site in subunit 1, a binuclear center (BNC) formed by heme A3 and copper B (CU(B)). The BNC reduces molecular oxygen to 2 water molecules using 4 electrons from cytochrome c in the IMS and 4 protons from the mitochondrial matrix. The protein is Cytochrome c oxidase subunit 5A, mitochondrial (COX5A) of Saimiri sciureus (Common squirrel monkey).